The following is a 411-amino-acid chain: E3 ubiquitin-protein ligase PUB23 (411 aa).

The U-box domain maps to 11 to 86 (EIPPFFLCPI…QSWCTLNASY (76 aa)). 4 ARM repeats span residues 132–173 (ATNK…HLET), 175–203 (ETVLKNLLNNKKDNNIVKSLTKIMQRGMY), 221–261 (DPMQ…NICP), and 263–306 (GRNR…LLCQ).

Interacts with RPN12A. Auto-ubiquitinated.

It is found in the cytoplasm. It catalyses the reaction S-ubiquitinyl-[E2 ubiquitin-conjugating enzyme]-L-cysteine + [acceptor protein]-L-lysine = [E2 ubiquitin-conjugating enzyme]-L-cysteine + N(6)-ubiquitinyl-[acceptor protein]-L-lysine.. It participates in protein modification; protein ubiquitination. E3 ubiquitin-protein ligase that negatively regulates water stress response. May control in coordination with PUB23 a drought signaling pathway by ubiquitinating cytosolic RPN12a. Acts as a negative regulator of the immunity triggered by the pathogen-associated molecular patterns (PAMPs), in association with PUB22 and PUB24. This is E3 ubiquitin-protein ligase PUB23 (PUB23) from Arabidopsis thaliana (Mouse-ear cress).